A 275-amino-acid polypeptide reads, in one-letter code: Proteasome subunit beta (275 aa).

Residues 1-52 constitute a propeptide, removed in mature form; by autocatalysis; the sequence is MQDTTANQVAANATSSFTEHLQRNRPGLLPYNQPFPAALTGAGSQPLQVPHA. T53 serves as the catalytic Nucleophile.

It belongs to the peptidase T1B family. As to quaternary structure, the 20S proteasome core is composed of 14 alpha and 14 beta subunits that assemble into four stacked heptameric rings, resulting in a barrel-shaped structure. The two inner rings, each composed of seven catalytic beta subunits, are sandwiched by two outer rings, each composed of seven alpha subunits. The catalytic chamber with the active sites is on the inside of the barrel. Has a gated structure, the ends of the cylinder being occluded by the N-termini of the alpha-subunits. Is capped by the proteasome-associated ATPase, ARC.

It localises to the cytoplasm. The catalysed reaction is Cleavage of peptide bonds with very broad specificity.. It participates in protein degradation; proteasomal Pup-dependent pathway. Its activity is regulated as follows. The formation of the proteasomal ATPase ARC-20S proteasome complex, likely via the docking of the C-termini of ARC into the intersubunit pockets in the alpha-rings, may trigger opening of the gate for substrate entry. Interconversion between the open-gate and close-gate conformations leads to a dynamic regulation of the 20S proteasome proteolysis activity. Component of the proteasome core, a large protease complex with broad specificity involved in protein degradation. In Arthrobacter sp. (strain FB24), this protein is Proteasome subunit beta.